The chain runs to 149 residues: Evolved beta-galactosidase subunit beta (149 aa).

As to quaternary structure, heterooctamer of 4 alpha and 4 beta subunits.

Required for full activity of the EbgA enzyme. Exact function not known. The sequence is that of Evolved beta-galactosidase subunit beta (ebgC) from Escherichia coli O6:H1 (strain CFT073 / ATCC 700928 / UPEC).